Here is a 591-residue protein sequence, read N- to C-terminus: V-type ATP synthase alpha chain (591 aa).

Position 233-240 (233-240) interacts with ATP; it reads GPFGAGKT.

This sequence belongs to the ATPase alpha/beta chains family.

The catalysed reaction is ATP + H2O + 4 H(+)(in) = ADP + phosphate + 5 H(+)(out). Its function is as follows. Produces ATP from ADP in the presence of a proton gradient across the membrane. The V-type alpha chain is a catalytic subunit. In Streptococcus pyogenes serotype M3 (strain ATCC BAA-595 / MGAS315), this protein is V-type ATP synthase alpha chain.